The sequence spans 341 residues: S-adenosylmethionine:tRNA ribosyltransferase-isomerase (341 aa).

This sequence belongs to the QueA family. As to quaternary structure, monomer.

It localises to the cytoplasm. The enzyme catalyses 7-aminomethyl-7-carbaguanosine(34) in tRNA + S-adenosyl-L-methionine = epoxyqueuosine(34) in tRNA + adenine + L-methionine + 2 H(+). Its pathway is tRNA modification; tRNA-queuosine biosynthesis. Transfers and isomerizes the ribose moiety from AdoMet to the 7-aminomethyl group of 7-deazaguanine (preQ1-tRNA) to give epoxyqueuosine (oQ-tRNA). The protein is S-adenosylmethionine:tRNA ribosyltransferase-isomerase of Clostridium botulinum (strain Eklund 17B / Type B).